The primary structure comprises 168 residues: Transcriptional repressor NrdR (168 aa).

Residues 1–21 (MQCPACRHTDSRVLESRSSES) are disordered. A zinc finger spans residues 3-34 (CPACRHTDSRVLESRSSESGRSVRRRRECLSC). Over residues 7 to 20 (RHTDSRVLESRSSE) the composition is skewed to basic and acidic residues. The ATP-cone domain occupies 49–139 (ISVIKRNGDR…VYRQFRGVRD (91 aa)).

This sequence belongs to the NrdR family. Zn(2+) is required as a cofactor.

In terms of biological role, negatively regulates transcription of bacterial ribonucleotide reductase nrd genes and operons by binding to NrdR-boxes. The protein is Transcriptional repressor NrdR of Synechococcus elongatus (strain ATCC 33912 / PCC 7942 / FACHB-805) (Anacystis nidulans R2).